We begin with the raw amino-acid sequence, 304 residues long: uncharacterized protein (304 aa).

Helical transmembrane passes span 9–29, 67–87, 100–120, 131–151, 159–179, 189–209, 222–242, 252–272, and 278–298; these read VFYV…SIHF, IILY…GNMF, AGSI…GIFF, EFYI…INSS, FFLG…QNLI, AVVI…CLAF, IGML…GMLM, ITVF…IGYL, and INIY…LALK. EamA domains lie at 13–148 and 171–298; these read LLMG…IFVI and FIQS…LALK.

The protein belongs to the EamA transporter family.

The protein resides in the cell membrane. This is an uncharacterized protein from Haemophilus influenzae (strain ATCC 51907 / DSM 11121 / KW20 / Rd).